We begin with the raw amino-acid sequence, 158 residues long: 6,7-dimethyl-8-ribityllumazine synthase (158 aa).

5-amino-6-(D-ribitylamino)uracil is bound by residues Phe22, 57–59 (AVE), and 81–83 (AVI). A (2S)-2-hydroxy-3-oxobutyl phosphate-binding site is contributed by 86–87 (GT). The Proton donor role is filled by His89. A 5-amino-6-(D-ribitylamino)uracil-binding site is contributed by Phe114. Arg128 lines the (2S)-2-hydroxy-3-oxobutyl phosphate pocket.

The protein belongs to the DMRL synthase family. In terms of assembly, forms an icosahedral capsid composed of 60 subunits, arranged as a dodecamer of pentamers.

The enzyme catalyses (2S)-2-hydroxy-3-oxobutyl phosphate + 5-amino-6-(D-ribitylamino)uracil = 6,7-dimethyl-8-(1-D-ribityl)lumazine + phosphate + 2 H2O + H(+). It functions in the pathway cofactor biosynthesis; riboflavin biosynthesis; riboflavin from 2-hydroxy-3-oxobutyl phosphate and 5-amino-6-(D-ribitylamino)uracil: step 1/2. Its function is as follows. Catalyzes the formation of 6,7-dimethyl-8-ribityllumazine by condensation of 5-amino-6-(D-ribitylamino)uracil with 3,4-dihydroxy-2-butanone 4-phosphate. This is the penultimate step in the biosynthesis of riboflavin. The polypeptide is 6,7-dimethyl-8-ribityllumazine synthase (Shewanella oneidensis (strain ATCC 700550 / JCM 31522 / CIP 106686 / LMG 19005 / NCIMB 14063 / MR-1)).